Here is a 463-residue protein sequence, read N- to C-terminus: Nitrogenase iron-molybdenum cofactor biosynthesis protein NifE (463 aa).

The protein belongs to the NifD/NifK/NifE/NifN family.

Its pathway is cofactor biosynthesis; Fe-Mo cofactor biosynthesis. Its function is as follows. This protein may play a role in the biosynthesis of the prosthetic group of nitrogenase (FeMo cofactor). The polypeptide is Nitrogenase iron-molybdenum cofactor biosynthesis protein NifE (nifE2) (Methanosarcina barkeri).